We begin with the raw amino-acid sequence, 335 residues long: Zinc finger protein CO3 (335 aa).

Cys-15, Cys-18, Cys-38, and His-43 together coordinate Zn(2+). A B box-type; atypical zinc finger spans residues 15-57 (CDSCRSAPCAFYCLADSAALCATCDADVHSVNPLARRHRRVPM). A disordered region spans residues 141–179 (AGEKEDASSSKDCSSSHGKSSEGSHEFAVPGEPVPERQG). A CCT domain is found at 268 to 310 (REARVHRYREKRKTRRFEKTIRYASRKAYAETRPRIKGRFAKR).

This sequence belongs to the CONSTANS family.

The protein localises to the nucleus. Probable transcription factor involved in the regulation of flowering time under short day (SD) conditions. Functions as a repressor of flowering under SD conditions, independently of HD1, EHD1, MADS50 and MADS51. Controls flowering time under SD conditions by negatively regulating the expression of HD3A and FTL. The polypeptide is Zinc finger protein CO3 (Oryza sativa subsp. japonica (Rice)).